Reading from the N-terminus, the 156-residue chain is Arginine repressor (156 aa).

The protein belongs to the ArgR family.

It localises to the cytoplasm. It functions in the pathway amino-acid biosynthesis; L-arginine biosynthesis [regulation]. In terms of biological role, regulates arginine biosynthesis genes. The protein is Arginine repressor of Pectobacterium atrosepticum (strain SCRI 1043 / ATCC BAA-672) (Erwinia carotovora subsp. atroseptica).